We begin with the raw amino-acid sequence, 126 residues long: KH homology domain-containing protein 1B (126 aa).

One can recognise a KH domain in the interval 19-78 (PLVFDMEEDQEDYIFGPDDEYLHTLEVHSNTLIQLERWFSPTGQTRVTVVGPLKARLWVM).

This sequence belongs to the KHDC1 family.

This chain is KH homology domain-containing protein 1B (Khdc1b), found in Mus musculus (Mouse).